The sequence spans 104 residues: Large ribosomal subunit protein uL23 (104 aa).

This sequence belongs to the universal ribosomal protein uL23 family. Part of the 50S ribosomal subunit. Contacts protein L29, and trigger factor when it is bound to the ribosome.

Functionally, one of the early assembly proteins it binds 23S rRNA. One of the proteins that surrounds the polypeptide exit tunnel on the outside of the ribosome. Forms the main docking site for trigger factor binding to the ribosome. The sequence is that of Large ribosomal subunit protein uL23 from Paraburkholderia phymatum (strain DSM 17167 / CIP 108236 / LMG 21445 / STM815) (Burkholderia phymatum).